A 450-amino-acid chain; its full sequence is Exodeoxyribonuclease 7 large subunit (450 aa).

The protein belongs to the XseA family. Heterooligomer composed of large and small subunits.

The protein resides in the cytoplasm. The catalysed reaction is Exonucleolytic cleavage in either 5'- to 3'- or 3'- to 5'-direction to yield nucleoside 5'-phosphates.. In terms of biological role, bidirectionally degrades single-stranded DNA into large acid-insoluble oligonucleotides, which are then degraded further into small acid-soluble oligonucleotides. In Listeria monocytogenes serotype 4b (strain CLIP80459), this protein is Exodeoxyribonuclease 7 large subunit.